The sequence spans 154 residues: MRKGKPARKLGRTAAHRRATLNNLSTQLILHKRIETTEAKAKETRKVIEKMITKARKGTVHAQRDIFKDIRDKKAIRILFEEVVAKVGARNGGYTRVIKLAPRLGDAAKMAIIEFVDYSEAISPAASQKSSKQDRAKRVQGSKKNVDAVAESAE.

The disordered stretch occupies residues 125–154; it reads AASQKSSKQDRAKRVQGSKKNVDAVAESAE.

It belongs to the bacterial ribosomal protein bL17 family. Part of the 50S ribosomal subunit. Contacts protein L32.

This chain is Large ribosomal subunit protein bL17, found in Chlorobium chlorochromatii (strain CaD3).